The sequence spans 427 residues: Gamma-glutamyl phosphate reductase (427 aa).

It belongs to the gamma-glutamyl phosphate reductase family.

The protein resides in the cytoplasm. It catalyses the reaction L-glutamate 5-semialdehyde + phosphate + NADP(+) = L-glutamyl 5-phosphate + NADPH + H(+). Its pathway is amino-acid biosynthesis; L-proline biosynthesis; L-glutamate 5-semialdehyde from L-glutamate: step 2/2. Catalyzes the NADPH-dependent reduction of L-glutamate 5-phosphate into L-glutamate 5-semialdehyde and phosphate. The product spontaneously undergoes cyclization to form 1-pyrroline-5-carboxylate. The sequence is that of Gamma-glutamyl phosphate reductase from Brucella anthropi (strain ATCC 49188 / DSM 6882 / CCUG 24695 / JCM 21032 / LMG 3331 / NBRC 15819 / NCTC 12168 / Alc 37) (Ochrobactrum anthropi).